The primary structure comprises 321 residues: Gap junction delta-2 protein (321 aa).

At 1–19 (MGEWTILERLLEAAVQQHS) the chain is on the cytoplasmic side. Residues 20 to 42 (TMIGRILLTVVVIFRILIVAIVG) traverse the membrane as a helical segment. Residues 43–75 (ETVYDDEQTMFVCNTLQPGCNQACYDRAFPISH) are Extracellular-facing. A helical membrane pass occupies residues 76–98 (IRYWVFQIIMVCTPSLCFITYSV). Residues 99–197 (HQSAKQRERR…KLRRQEGISR (99 aa)) are Cytoplasmic-facing. Residues 117–141 (DRDPPESMGGPGGTGGGGSGGGKRE) form a disordered region. The span at 125-137 (GGPGGTGGGGSGG) shows a compositional bias: gly residues. The helical transmembrane segment at 198–220 (FYIIQVVFRNALEIGFLVGQYFL) threads the bilayer. Residues 221-252 (YGFSVPGLYECDRYPCIKEVECYVSRPTEKTV) are Extracellular-facing. The chain crosses the membrane as a helical span at residues 253–275 (FLVFMFAVSGICVVLNLAELNHL). Residues 276-321 (GWRKIKLAVRGAQAKRKSVYEIRNKDLPRVSVPNFGRTQSSDSAYV) are Cytoplasmic-facing.

Belongs to the connexin family. Delta-type subfamily. In terms of assembly, a connexon is composed of a hexamer of connexins.

It localises to the cell membrane. Its subcellular location is the cell junction. It is found in the gap junction. Its function is as follows. One gap junction consists of a cluster of closely packed pairs of transmembrane channels, the connexons, through which materials of low MW diffuse from one cell to a neighboring cell. This Bos taurus (Bovine) protein is Gap junction delta-2 protein (GJD2).